A 216-amino-acid polypeptide reads, in one-letter code: Cytochrome c biogenesis ATP-binding export protein CcmA (216 aa).

Residues 5 to 216 enclose the ABC transporter domain; it reads ISVDTLLSAS…RKIRLDYRFV (212 aa). 43–50 provides a ligand contact to ATP; the sequence is GPNGAGKT.

The protein belongs to the ABC transporter superfamily. CcmA exporter (TC 3.A.1.107) family. As to quaternary structure, the complex is composed of two ATP-binding proteins (CcmA) and two transmembrane proteins (CcmB).

It is found in the cell inner membrane. It catalyses the reaction heme b(in) + ATP + H2O = heme b(out) + ADP + phosphate + H(+). Part of the ABC transporter complex CcmAB involved in the biogenesis of c-type cytochromes; once thought to export heme, this seems not to be the case, but its exact role is uncertain. Responsible for energy coupling to the transport system. This Shewanella oneidensis (strain ATCC 700550 / JCM 31522 / CIP 106686 / LMG 19005 / NCIMB 14063 / MR-1) protein is Cytochrome c biogenesis ATP-binding export protein CcmA.